Here is a 486-residue protein sequence, read N- to C-terminus: uncharacterized protein (486 aa).

24-35 is an NAD(+) binding site; that stretch reads IVHLGFGAFHRA.

This sequence belongs to the mannitol dehydrogenase family. UxuB subfamily.

This is an uncharacterized protein from Escherichia coli (strain K12).